Here is a 260-residue protein sequence, read N- to C-terminus: BTB/POZ domain-containing protein KCTD21 (260 aa).

The 70-residue stretch at 3–72 (DPITLNVGGK…LRTSHLDLPE (70 aa)) folds into the BTB domain. Residues 88 to 112 (QVQPLIEALQEKEVELSKAEKNAML) are a coiled coil.

In terms of assembly, homopentamer. Interacts with KCTD11; KCTD21 and KCTD11 may associate in pentameric assemblies. Interacts (via BTB domain) with CUL3; indicative for a participation in a BCR (BTB-CUL3-RBX1) E3 ubiquitin-protein ligase complex. As to expression, highly expressed in cerebellum and brain. Expression is down-regulated in medulloblastoma.

It functions in the pathway protein modification; protein ubiquitination. Probable substrate-specific adapter of a BCR (BTB-CUL3-RBX1) E3 ubiquitin-protein ligase complex mediating the ubiquitination and subsequent proteasomal degradation of target proteins. Promotes the ubiquitination of HDAC1. Can function as antagonist of the Hedgehog pathway by affecting the nuclear transfer of transcription factor GLI1; the function probably occurs via HDAC1 down-regulation, keeping GLI1 acetylated and inactive. Inhibits cell growth and tumorigenicity of medulloblastoma (MDB). The sequence is that of BTB/POZ domain-containing protein KCTD21 (KCTD21) from Homo sapiens (Human).